The sequence spans 373 residues: RNA 3'-terminal phosphate cyclase-like protein (373 aa).

The protein belongs to the RNA 3'-terminal cyclase family. Type 2 subfamily. Part of the small subunit (SSU) processome, composed of more than 70 proteins and the RNA chaperone small nucleolar RNA (snoRNA) U3. Interacts with BMS1.

Its subcellular location is the nucleus. The protein resides in the nucleolus. As part of the small subunit (SSU) processome, it plays a role in 40S-ribosomal-subunit biogenesis in the early pre-rRNA processing steps at sites A0, A1 and A2 that are required for proper maturation of the 18S RNA. Activates BMS1 by promoting GDP/GTP exchange. Does not have cyclase activity. The protein is RNA 3'-terminal phosphate cyclase-like protein of Homo sapiens (Human).